Here is a 765-residue protein sequence, read N- to C-terminus: Protein transport protein Sec23A (765 aa).

At Thr-2 the chain carries N-acetylthreonine. 4 residues coordinate Zn(2+): Cys-61, Cys-66, Cys-85, and Cys-88. A Phosphothreonine modification is found at Thr-308. One copy of the Gelsolin-like repeat lies at 632 to 718; it reads PEPVLLDSSS…EHGGSQARFL (87 aa).

It belongs to the SEC23/SEC24 family. SEC23 subfamily. In terms of assembly, COPII is composed of at least five proteins: the Sec23/24 complex, the Sec13/31 complex and Sar1. Interacts with SEC23IP. Interacts with HTR4. Interacts with SEC16A. Interacts with SLC6A4. Interacts (as part of the Sec23/24 complex) with SEC22B; recruits SEC22B into COPII-coated vesicles and allows the transport of this cargo from the endoplasmic reticulum to the Golgi. Interacts (via Gelsolin-like repeat) with MIA2 and MIA3; specifically involved in the transport of large cargos like the collagen COL7A1. Interacts with DDHD1. Interacts with TMEM39A. Interacts with SACM1L; this interaction is reduced in the absence of TMEM39A. Interacts with kinase FAM20C; transport of FAM20C from the endoplasmic reticulum to the Golgi is likely to be mediated by COPII vesicles.

Its subcellular location is the cytoplasmic vesicle. The protein localises to the COPII-coated vesicle membrane. The protein resides in the endoplasmic reticulum membrane. It is found in the cytoplasm. It localises to the cytosol. Component of the coat protein complex II (COPII) which promotes the formation of transport vesicles from the endoplasmic reticulum (ER). The coat has two main functions, the physical deformation of the endoplasmic reticulum membrane into vesicles and the selection of cargo molecules for their transport to the Golgi complex. Required for the translocation of insulin-induced glucose transporter SLC2A4/GLUT4 to the cell membrane. The protein is Protein transport protein Sec23A of Pongo abelii (Sumatran orangutan).